A 129-amino-acid chain; its full sequence is Glycine cleavage system H protein (129 aa).

The Lipoyl-binding domain occupies 23 to 104 (SVTVGITHHA…AYTAWLFKIK (82 aa)). Lysine 64 is modified (N6-lipoyllysine).

Belongs to the GcvH family. In terms of assembly, the glycine cleavage system is composed of four proteins: P, T, L and H. It depends on (R)-lipoate as a cofactor.

The glycine cleavage system catalyzes the degradation of glycine. The H protein shuttles the methylamine group of glycine from the P protein to the T protein. The polypeptide is Glycine cleavage system H protein (Thiobacillus denitrificans (strain ATCC 25259 / T1)).